The sequence spans 110 residues: Parvalbumin alpha (110 aa).

EF-hand domains are found at residues 39-74 (KNAK…FAPE) and 78-110 (LSEK…VANS). Asp-52, Asp-54, Ser-56, Phe-58, Glu-60, Glu-63, Asp-91, Asp-93, Asp-95, Lys-97, and Glu-102 together coordinate Ca(2+).

Belongs to the parvalbumin family.

In terms of biological role, in muscle, parvalbumin is thought to be involved in relaxation after contraction. It binds two calcium ions. The sequence is that of Parvalbumin alpha from Callorhinchus milii (Ghost shark).